A 435-amino-acid chain; its full sequence is MLYSSLRSSLLANIPHSNRFVIALSGGLDSRVLLHLMGRFIQENPQYQCDAVHVHHGLSVNADKWAQQCLQWAFEEKITCHIEHVTLVLGNRISVEQQAREQRYLALSKHVQQGDCLLTAQHADDQLETFLLALKRGSGPAGLASMPESTTFGISYHLRPLLQVTRQSITDYGIAHQLEWVEDESNQDQRYDRNFLRHQITPLLHQRWPGIRKAVSRSAALCGEQEALLNELLASHLSKALHVDQSLKIVELGSERIGKQLIRQWLSLFTVLMPSQAQLQQIWQSVVLAQDDANPQVCWDNHQIRRYKQRLYVVKQWADISLFQQKCELNQACSLPEGLGTLVLTTVKANGILRLPQQHEIVSVRFEPEGIEAKPQGRIGKRKLKKLFQEYEVPSWNRRRTPLVFYNDRLAAVAGLFVTEDFFGEDCDLDWLCNS.

25–30 lines the ATP pocket; that stretch reads SGGLDS.

The protein belongs to the tRNA(Ile)-lysidine synthase family.

Its subcellular location is the cytoplasm. It catalyses the reaction cytidine(34) in tRNA(Ile2) + L-lysine + ATP = lysidine(34) in tRNA(Ile2) + AMP + diphosphate + H(+). Functionally, ligates lysine onto the cytidine present at position 34 of the AUA codon-specific tRNA(Ile) that contains the anticodon CAU, in an ATP-dependent manner. Cytidine is converted to lysidine, thus changing the amino acid specificity of the tRNA from methionine to isoleucine. The chain is tRNA(Ile)-lysidine synthase from Photobacterium profundum (strain SS9).